Reading from the N-terminus, the 316-residue chain is N-acetylmuramic acid 6-phosphate etherase (316 aa).

Residues 66 to 229 (IVAAIGRGGR…STASMIRLGK (164 aa)) form the SIS domain. Glu94 (proton donor) is an active-site residue. Residue Glu125 is part of the active site.

The protein belongs to the GCKR-like family. MurNAc-6-P etherase subfamily. As to quaternary structure, homodimer.

The catalysed reaction is N-acetyl-D-muramate 6-phosphate + H2O = N-acetyl-D-glucosamine 6-phosphate + (R)-lactate. It participates in amino-sugar metabolism; 1,6-anhydro-N-acetylmuramate degradation. The protein operates within amino-sugar metabolism; N-acetylmuramate degradation. It functions in the pathway cell wall biogenesis; peptidoglycan recycling. In terms of biological role, specifically catalyzes the cleavage of the D-lactyl ether substituent of MurNAc 6-phosphate, producing GlcNAc 6-phosphate and D-lactate. Together with AnmK, is also required for the utilization of anhydro-N-acetylmuramic acid (anhMurNAc) either imported from the medium or derived from its own cell wall murein, and thus plays a role in cell wall recycling. In Jannaschia sp. (strain CCS1), this protein is N-acetylmuramic acid 6-phosphate etherase.